The chain runs to 503 residues: Probable cytosol aminopeptidase (503 aa).

Mn(2+) contacts are provided by lysine 270 and aspartate 275. Lysine 282 is an active-site residue. Mn(2+)-binding residues include aspartate 293, aspartate 352, and glutamate 354. Residue arginine 356 is part of the active site.

Belongs to the peptidase M17 family. Mn(2+) serves as cofactor.

It localises to the cytoplasm. It carries out the reaction Release of an N-terminal amino acid, Xaa-|-Yaa-, in which Xaa is preferably Leu, but may be other amino acids including Pro although not Arg or Lys, and Yaa may be Pro. Amino acid amides and methyl esters are also readily hydrolyzed, but rates on arylamides are exceedingly low.. The catalysed reaction is Release of an N-terminal amino acid, preferentially leucine, but not glutamic or aspartic acids.. Presumably involved in the processing and regular turnover of intracellular proteins. Catalyzes the removal of unsubstituted N-terminal amino acids from various peptides. The chain is Probable cytosol aminopeptidase from Salmonella arizonae (strain ATCC BAA-731 / CDC346-86 / RSK2980).